A 151-amino-acid chain; its full sequence is Methylated-DNA--protein-cysteine methyltransferase (151 aa).

Cys-119 acts as the Nucleophile; methyl group acceptor in catalysis.

Belongs to the MGMT family.

The protein localises to the cytoplasm. The catalysed reaction is a 6-O-methyl-2'-deoxyguanosine in DNA + L-cysteinyl-[protein] = S-methyl-L-cysteinyl-[protein] + a 2'-deoxyguanosine in DNA. It carries out the reaction a 4-O-methyl-thymidine in DNA + L-cysteinyl-[protein] = a thymidine in DNA + S-methyl-L-cysteinyl-[protein]. Its function is as follows. Involved in the cellular defense against the biological effects of O6-methylguanine (O6-MeG) and O4-methylthymine (O4-MeT) in DNA. Repairs the methylated nucleobase in DNA by stoichiometrically transferring the methyl group to a cysteine residue in the enzyme. This is a suicide reaction: the enzyme is irreversibly inactivated. The protein is Methylated-DNA--protein-cysteine methyltransferase of Saccharolobus islandicus (strain L.S.2.15 / Lassen #1) (Sulfolobus islandicus).